Here is a 371-residue protein sequence, read N- to C-terminus: 2-aminoethylphosphonate--pyruvate transaminase (371 aa).

K195 is subject to N6-(pyridoxal phosphate)lysine.

It belongs to the class-V pyridoxal-phosphate-dependent aminotransferase family. PhnW subfamily. Homodimer. It depends on pyridoxal 5'-phosphate as a cofactor.

The catalysed reaction is (2-aminoethyl)phosphonate + pyruvate = phosphonoacetaldehyde + L-alanine. Its function is as follows. Involved in phosphonate degradation. The sequence is that of 2-aminoethylphosphonate--pyruvate transaminase from Pseudomonas aeruginosa (strain UCBPP-PA14).